Here is a 343-residue protein sequence, read N- to C-terminus: Anthranilate phosphoribosyltransferase (343 aa).

5-phospho-alpha-D-ribose 1-diphosphate contacts are provided by residues G77, 80–81, T85, 87–90, 105–113, and S117; these read GD, NVST, and KHGNRSSSG. Residue G77 participates in anthranilate binding. Mg(2+) is bound at residue S89. N108 is an anthranilate binding site. R163 provides a ligand contact to anthranilate. Mg(2+) is bound by residues D222 and E223.

Belongs to the anthranilate phosphoribosyltransferase family. As to quaternary structure, homodimer. Mg(2+) serves as cofactor.

The enzyme catalyses N-(5-phospho-beta-D-ribosyl)anthranilate + diphosphate = 5-phospho-alpha-D-ribose 1-diphosphate + anthranilate. It participates in amino-acid biosynthesis; L-tryptophan biosynthesis; L-tryptophan from chorismate: step 2/5. Its function is as follows. Catalyzes the transfer of the phosphoribosyl group of 5-phosphorylribose-1-pyrophosphate (PRPP) to anthranilate to yield N-(5'-phosphoribosyl)-anthranilate (PRA). In Cenarchaeum symbiosum (strain A), this protein is Anthranilate phosphoribosyltransferase.